The chain runs to 121 residues: Large ribosomal subunit protein uL14 (121 aa).

It belongs to the universal ribosomal protein uL14 family. Part of the 50S ribosomal subunit. Forms a cluster with proteins L3 and L19. In the 70S ribosome, L14 and L19 interact and together make contacts with the 16S rRNA in bridges B5 and B8.

In terms of biological role, binds to 23S rRNA. Forms part of two intersubunit bridges in the 70S ribosome. This Phocaeicola vulgatus (strain ATCC 8482 / DSM 1447 / JCM 5826 / CCUG 4940 / NBRC 14291 / NCTC 11154) (Bacteroides vulgatus) protein is Large ribosomal subunit protein uL14.